Here is a 228-residue protein sequence, read N- to C-terminus: Ribose-5-phosphate isomerase A (228 aa).

Substrate-binding positions include 27–30 (TGTT), 86–89 (DGAD), and 100–103 (KGMG). The active-site Proton acceptor is the E109. Position 127 (K127) interacts with substrate.

Belongs to the ribose 5-phosphate isomerase family. As to quaternary structure, homodimer.

It carries out the reaction aldehydo-D-ribose 5-phosphate = D-ribulose 5-phosphate. It functions in the pathway carbohydrate degradation; pentose phosphate pathway; D-ribose 5-phosphate from D-ribulose 5-phosphate (non-oxidative stage): step 1/1. In terms of biological role, catalyzes the reversible conversion of ribose-5-phosphate to ribulose 5-phosphate. In Borreliella afzelii (strain PKo) (Borrelia afzelii), this protein is Ribose-5-phosphate isomerase A.